The chain runs to 298 residues: Short-chain dehydrogenase reductase 4 (298 aa).

NAD(+) is bound at residue 50 to 74 (IITGGASGIGAEAVRLFTDHGAKVV). Serine 182 is a substrate binding site. Residue tyrosine 195 is the Proton acceptor of the active site.

This sequence belongs to the short-chain dehydrogenases/reductases (SDR) family.

The sequence is that of Short-chain dehydrogenase reductase 4 (SDR4) from Arabidopsis thaliana (Mouse-ear cress).